A 425-amino-acid polypeptide reads, in one-letter code: Serine--tRNA ligase (425 aa).

Thr-233–Glu-235 serves as a coordination point for L-serine. Arg-264–Glu-266 contacts ATP. An L-serine-binding site is contributed by Glu-287. Glu-351–Ser-354 contacts ATP. Ser-387 serves as a coordination point for L-serine.

The protein belongs to the class-II aminoacyl-tRNA synthetase family. Type-1 seryl-tRNA synthetase subfamily. In terms of assembly, homodimer. The tRNA molecule binds across the dimer.

It localises to the cytoplasm. It catalyses the reaction tRNA(Ser) + L-serine + ATP = L-seryl-tRNA(Ser) + AMP + diphosphate + H(+). The catalysed reaction is tRNA(Sec) + L-serine + ATP = L-seryl-tRNA(Sec) + AMP + diphosphate + H(+). It functions in the pathway aminoacyl-tRNA biosynthesis; selenocysteinyl-tRNA(Sec) biosynthesis; L-seryl-tRNA(Sec) from L-serine and tRNA(Sec): step 1/1. In terms of biological role, catalyzes the attachment of serine to tRNA(Ser). Is also able to aminoacylate tRNA(Sec) with serine, to form the misacylated tRNA L-seryl-tRNA(Sec), which will be further converted into selenocysteinyl-tRNA(Sec). This is Serine--tRNA ligase from Thermotoga sp. (strain RQ2).